Here is a 217-residue protein sequence, read N- to C-terminus: Protein-L-isoaspartate O-methyltransferase (217 aa).

Ser61 is a catalytic residue.

The protein belongs to the methyltransferase superfamily. L-isoaspartyl/D-aspartyl protein methyltransferase family.

It is found in the cytoplasm. The catalysed reaction is [protein]-L-isoaspartate + S-adenosyl-L-methionine = [protein]-L-isoaspartate alpha-methyl ester + S-adenosyl-L-homocysteine. Its function is as follows. Catalyzes the methyl esterification of L-isoaspartyl residues in peptides and proteins that result from spontaneous decomposition of normal L-aspartyl and L-asparaginyl residues. It plays a role in the repair and/or degradation of damaged proteins. This is Protein-L-isoaspartate O-methyltransferase from Brucella anthropi (strain ATCC 49188 / DSM 6882 / CCUG 24695 / JCM 21032 / LMG 3331 / NBRC 15819 / NCTC 12168 / Alc 37) (Ochrobactrum anthropi).